A 157-amino-acid chain; its full sequence is UPF0758 protein VC_0510 (157 aa).

The MPN domain maps to alanine 36–leucine 157. Histidine 107, histidine 109, and aspartate 120 together coordinate Zn(2+). Positions histidine 107 to aspartate 120 match the JAMM motif motif.

It belongs to the UPF0758 family.

This Vibrio cholerae serotype O1 (strain ATCC 39315 / El Tor Inaba N16961) protein is UPF0758 protein VC_0510.